We begin with the raw amino-acid sequence, 198 residues long: MVKCKLFFWLISWFLKVKNGEKVWKFLRSCPENCYSDPQFAFIGRSNVGKSTLINALANKKIAKTSTKPGRTQLLNFYKNESEKLFVDLPGYGYAAVSKTKKDQIDRIIAGYFQKDQPISAVFLILDARVGFTNLDYIMIEYIIKQGFKLHILANKIDKTNQSTRAILLNQCKKLKLNCLLISAKNKNNLSKLQELLE.

In terms of domain architecture, EngB-type G spans Ser-36 to Glu-198. Residues Gly-44–Ser-51, Gly-70–Leu-74, Asp-88–Gly-91, Asn-155–Asp-158, and Ile-182–Ala-184 contribute to the GTP site. Positions 51 and 72 each coordinate Mg(2+).

It belongs to the TRAFAC class TrmE-Era-EngA-EngB-Septin-like GTPase superfamily. EngB GTPase family. Mg(2+) is required as a cofactor.

In terms of biological role, necessary for normal cell division and for the maintenance of normal septation. The sequence is that of Probable GTP-binding protein EngB from Mesomycoplasma hyopneumoniae (strain J / ATCC 25934 / NCTC 10110) (Mycoplasma hyopneumoniae).